A 638-amino-acid chain; its full sequence is Phenylethylamine oxidase (638 aa).

Residues 1 to 2 constitute a propeptide that is removed on maturation; the sequence is MT. 296–307 is a substrate binding site; it reads YFDTGEYLVGQY. Catalysis depends on Asp-298, which acts as the Proton acceptor. A disulfide bond links Cys-317 and Cys-343. 379–384 serves as a coordination point for substrate; the sequence is IGNYDY. Tyr-382 functions as the Schiff-base intermediate with substrate; via topaquinone in the catalytic mechanism. Position 382 is a 2',4',5'-topaquinone (Tyr-382). Cu cation is bound by residues His-431, His-433, and His-592.

It belongs to the copper/topaquinone oxidase family. In terms of assembly, homodimer. Cu cation serves as cofactor. L-topaquinone is required as a cofactor. Post-translationally, topaquinone (TPQ) is generated by copper-dependent autoxidation of a specific tyrosyl residue.

The enzyme catalyses a primary methyl amine + O2 + H2O = an aldehyde + H2O2 + NH4(+). It catalyses the reaction 2-phenylethylamine + O2 + H2O = 2-phenylacetaldehyde + H2O2 + NH4(+). Catalyzes the oxidative deamination of phenylethylamine to phenylacetaldehyde with the concomitant production of hydrogen peroxide and ammonia. The protein is Phenylethylamine oxidase of Arthrobacter globiformis.